We begin with the raw amino-acid sequence, 156 residues long: Putative pre-16S rRNA nuclease (156 aa).

The protein belongs to the YqgF nuclease family.

It localises to the cytoplasm. In terms of biological role, could be a nuclease involved in processing of the 5'-end of pre-16S rRNA. The chain is Putative pre-16S rRNA nuclease from Nocardioides sp. (strain ATCC BAA-499 / JS614).